The chain runs to 127 residues: Large ribosomal subunit protein bL17 (127 aa).

This sequence belongs to the bacterial ribosomal protein bL17 family. As to quaternary structure, part of the 50S ribosomal subunit. Contacts protein L32.

This Xanthomonas axonopodis pv. citri (strain 306) protein is Large ribosomal subunit protein bL17.